The chain runs to 323 residues: Elongation factor P--(R)-beta-lysine ligase (323 aa).

76–78 lines the substrate pocket; it reads SPE. ATP is bound by residues 100–102 and N109; that span reads RNE. A substrate-binding site is contributed by Y118. 242-243 serves as a coordination point for ATP; sequence EL. Residue E249 participates in substrate binding. Residue G298 coordinates ATP.

The protein belongs to the class-II aminoacyl-tRNA synthetase family. EpmA subfamily. As to quaternary structure, homodimer.

The enzyme catalyses D-beta-lysine + L-lysyl-[protein] + ATP = N(6)-((3R)-3,6-diaminohexanoyl)-L-lysyl-[protein] + AMP + diphosphate + H(+). Its function is as follows. With EpmB is involved in the beta-lysylation step of the post-translational modification of translation elongation factor P (EF-P). Catalyzes the ATP-dependent activation of (R)-beta-lysine produced by EpmB, forming a lysyl-adenylate, from which the beta-lysyl moiety is then transferred to the epsilon-amino group of a conserved specific lysine residue in EF-P. This Haemophilus influenzae (strain PittGG) protein is Elongation factor P--(R)-beta-lysine ligase.